We begin with the raw amino-acid sequence, 166 residues long: Large ribosomal subunit protein uL10 (166 aa).

Belongs to the universal ribosomal protein uL10 family. Part of the ribosomal stalk of the 50S ribosomal subunit. The N-terminus interacts with L11 and the large rRNA to form the base of the stalk. The C-terminus forms an elongated spine to which L12 dimers bind in a sequential fashion forming a multimeric L10(L12)X complex.

Functionally, forms part of the ribosomal stalk, playing a central role in the interaction of the ribosome with GTP-bound translation factors. The sequence is that of Large ribosomal subunit protein uL10 from Azotobacter vinelandii (strain DJ / ATCC BAA-1303).